The sequence spans 240 residues: MEQPKYKRVVLKLSGEALAGKQGFGIQPAVIQSIAKQVKEVVELGVEVAIVVGGGNIWRGKTGSEMGMDRATADYMGMLATVMNALALQDSLEQLGVETRVQTSIEMRQVAEPYIRRRAIRHLEKKRVVIFAAGTGNPYFSTDTTAALRAAEIEADVILMAKNNVDGVYSADPNVDANAVKYDELSYLDVIKQGLGVMDSTASSLCMDNNIPLIVFSIMEEGNIKRAVLGENIGTIVRGK.

12 to 15 (KLSG) serves as a coordination point for ATP. The interval 20–25 (GKQGFG) is involved in allosteric activation by GTP. Gly-54 is a binding site for UMP. Residues Gly-55 and Arg-59 each coordinate ATP. Residues Asp-74 and 135 to 142 (TGNPYFST) contribute to the UMP site. The ATP site is built by Asn-163, Tyr-169, and Asp-172.

This sequence belongs to the UMP kinase family. In terms of assembly, homohexamer.

It is found in the cytoplasm. The enzyme catalyses UMP + ATP = UDP + ADP. It participates in pyrimidine metabolism; CTP biosynthesis via de novo pathway; UDP from UMP (UMPK route): step 1/1. Allosterically activated by GTP. Inhibited by UTP. Functionally, catalyzes the reversible phosphorylation of UMP to UDP. This chain is Uridylate kinase, found in Geobacillus kaustophilus (strain HTA426).